A 340-amino-acid polypeptide reads, in one-letter code: Protein-arginine kinase (340 aa).

The 228-residue stretch at 14 to 241 folds into the Phosphagen kinase C-terminal domain; sequence IVLSSRIRLA…YQIINQEKLA (228 aa). ATP is bound by residues 17 to 21, Arg112, 163 to 167, and 194 to 199; these read SSRIR, RASVM, and RGIYGE.

This sequence belongs to the ATP:guanido phosphotransferase family.

It carries out the reaction L-arginyl-[protein] + ATP = N(omega)-phospho-L-arginyl-[protein] + ADP + H(+). Catalyzes the specific phosphorylation of arginine residues in proteins. This Clostridium tetani (strain Massachusetts / E88) protein is Protein-arginine kinase.